Here is a 424-residue protein sequence, read N- to C-terminus: Interferon regulatory factor 8 (424 aa).

The segment at residues 7–114 (GRRLRQWLIE…EPYKVYRIVP (108 aa)) is a DNA-binding region (IRF tryptophan pentad repeat).

This sequence belongs to the IRF family. Interacts with COPS2. Interacts (via C-terminus) with TRIM21 (via C-terminus). Interacts with the BATF-JUNB heterodimer. Interacts with BATF (via bZIP domain); the interaction is direct. Interacts with SPI1. In terms of processing, ubiquitinated. Ubiquitination by TRIM21 in macrophages, a process that is strongly increased upon interferon gamma stimulation, leds to the enhanced transcriptional activity of target cytokine genes. Ubiquitination leads to its degradation by the proteasome. Sumoylated with SUMO3. Desumoylated by SENP1. Expressed in bone marrow macrophages (at protein level). Mainly expressed in lymphoid tissues. Predominantly expressed in CD8(+)-expressing dendritic cells.

It localises to the nucleus. The protein resides in the cytoplasm. Functionally, transcription factor that specifically binds to the upstream regulatory region of type I interferon (IFN) and IFN-inducible MHC class I genes (the interferon consensus sequence (ICS)). Can both act as a transcriptional activator or repressor. Plays a negative regulatory role in cells of the immune system. Involved in CD8(+) dendritic cell differentiation by forming a complex with the BATF-JUNB heterodimer in immune cells, leading to recognition of AICE sequence (5'-TGAnTCA/GAAA-3'), an immune-specific regulatory element, followed by cooperative binding of BATF and IRF8 and activation of genes. Required for the development of plasmacytoid dendritic cells (pDCs), which produce most of the type I IFN in response to viral infection. Positively regulates macroautophagy in dendritic cells. Acts as a transcriptional repressor of osteoclast differentiation factors such as NFATC1 and EEIG1. In Mus musculus (Mouse), this protein is Interferon regulatory factor 8.